We begin with the raw amino-acid sequence, 467 residues long: UDP-N-acetylmuramate--L-alanine ligase (467 aa).

Residue 114–120 (GTHGKTT) participates in ATP binding.

It belongs to the MurCDEF family.

It localises to the cytoplasm. The catalysed reaction is UDP-N-acetyl-alpha-D-muramate + L-alanine + ATP = UDP-N-acetyl-alpha-D-muramoyl-L-alanine + ADP + phosphate + H(+). It participates in cell wall biogenesis; peptidoglycan biosynthesis. In terms of biological role, cell wall formation. This Nitrobacter hamburgensis (strain DSM 10229 / NCIMB 13809 / X14) protein is UDP-N-acetylmuramate--L-alanine ligase.